The primary structure comprises 364 residues: tRNA-specific 2-thiouridylase MnmA (364 aa).

ATP contacts are provided by residues 12-19 (GISGGVDS) and methionine 38. Positions 98 to 100 (NPD) are interaction with target base in tRNA. Cysteine 103 serves as the catalytic Nucleophile. A disulfide bond links cysteine 103 and cysteine 199. Residue glycine 127 participates in ATP binding. Positions 149-151 (KEQ) are interaction with tRNA. Cysteine 199 functions as the Cysteine persulfide intermediate in the catalytic mechanism. Positions 311-312 (RY) are interaction with tRNA.

Belongs to the MnmA/TRMU family.

The protein resides in the cytoplasm. It carries out the reaction S-sulfanyl-L-cysteinyl-[protein] + uridine(34) in tRNA + AH2 + ATP = 2-thiouridine(34) in tRNA + L-cysteinyl-[protein] + A + AMP + diphosphate + H(+). Catalyzes the 2-thiolation of uridine at the wobble position (U34) of tRNA, leading to the formation of s(2)U34. The chain is tRNA-specific 2-thiouridylase MnmA from Hahella chejuensis (strain KCTC 2396).